The following is a 133-amino-acid chain: Putative elongation factor 1-delta-like protein (133 aa).

Low complexity predominate over residues 58–73 (SLAGSLGPGASSGPSG). Disordered stretches follow at residues 58 to 77 (SLAGSLGPGASSGPSGDHSE) and 89 to 133 (NQRD…TSRG). Basic and acidic residues predominate over residues 89–102 (NQRDLAERAGEELA).

Belongs to the EF-1-beta/EF-1-delta family.

The polypeptide is Putative elongation factor 1-delta-like protein (EEF1DP3) (Homo sapiens (Human)).